Consider the following 166-residue polypeptide: Macrocypin-5a (166 aa).

Residues 20–39 (NIPGGMYASSKDGKDEPVTA) are disordered.

Belongs to the protease inhibitor I85 family.

Functionally, inhibits papain and cysteine cathepsin endopeptidases, and also inhibits cathepsins B and H, which exhibit both exopeptidase and endopeptidase activities. The polypeptide is Macrocypin-5a (Macrolepiota procera (Parasol mushroom)).